The sequence spans 306 residues: Homeobox protein CUP9 (306 aa).

The segment at 75–123 (PAINSGGTSTTATPTASTVETSKTSSSAMDTQSQYGSSKKSKSASDDAK) is disordered. A compositionally biased stretch (low complexity) spans 79-96 (SGGTSTTATPTASTVETS). Over residues 97–110 (KTSSSAMDTQSQYG) the composition is skewed to polar residues. The homeobox; TALE-type DNA-binding region spans 162–224 (NSGRRSNLPK…NVRRRKIFSD (63 aa)).

The protein belongs to the TALE/CUP9 homeobox family.

The protein resides in the nucleus. Functionally, probable DNA-binding protein which plays a role in protecting yeast cells against copper toxicity. May regulate the expression of important copper homeostatic genes. The polypeptide is Homeobox protein CUP9 (CUP9) (Saccharomyces cerevisiae (strain ATCC 204508 / S288c) (Baker's yeast)).